A 416-amino-acid chain; its full sequence is Adipocyte plasma membrane-associated protein (416 aa).

Residues 1-39 (MNEPEGLRFRRLNRPQIITDELQEPQYKGTSTYSGKVFR) lie on the Cytoplasmic side of the membrane. A helical membrane pass occupies residues 40-60 (VILVTLGGCLILPLLVVFFLL). Residues 61–412 (ESPIHPELLS…FRSPYLCKLD (352 aa)) lie on the Extracellular side of the membrane. N-linked (GlcNAc...) asparagine glycosylation is present at asparagine 160.

It belongs to the strictosidine synthase family.

The protein resides in the membrane. This is Adipocyte plasma membrane-associated protein (apmap) from Salmo salar (Atlantic salmon).